The sequence spans 419 residues: L-rhamnose isomerase (419 aa).

Mn(2+) is bound by residues His262, Asp294, and Asp296.

This sequence belongs to the rhamnose isomerase family. Homotetramer. It depends on Mn(2+) as a cofactor.

Its subcellular location is the cytoplasm. It catalyses the reaction L-rhamnopyranose = L-rhamnulose. It functions in the pathway carbohydrate degradation; L-rhamnose degradation; glycerone phosphate from L-rhamnose: step 1/3. Catalyzes the interconversion of L-rhamnose and L-rhamnulose. This is L-rhamnose isomerase from Klebsiella pneumoniae (strain 342).